The chain runs to 952 residues: Eukaryotic initiation factor 4F subunit p150 (952 aa).

3 disordered regions span residues 1–77 (MTDE…NYNG), 115–389 (GSAP…DAGT), and 481–575 (VIPP…LVPS). Positions 7–16 (HPTQSASKQE) are enriched in polar residues. A compositionally biased stretch (low complexity) spans 29-46 (ESQQQRGYTNYNNGSNYT). Positions 47–56 (QKKPYNSNRP) are enriched in polar residues. Residues 65–74 (GPNRYNNRGN) show a composition bias toward low complexity. The segment covering 140–151 (SGEHLDLKEQHK) has biased composition (basic and acidic residues). Residues 154–166 (LQSQERSTVSPQP) show a composition bias toward polar residues. Serine 163 carries the phosphoserine modification. The span at 175–191 (DSTSTSTPTPTPSTNDS) shows a compositional bias: low complexity. The residue at position 181 (threonine 181) is a Phosphothreonine. Residues 188-299 (TNDSKASSEE…KEESTPKVLT (112 aa)) are interaction with PAB1. The residue at position 195 (serine 195) is a Phosphoserine. Residues 218–228 (AALEKKRKEQL) show a composition bias toward basic and acidic residues. Positions 229–244 (EGSSGNNNIPMKTTPE) are enriched in polar residues. 3 stretches are compositionally biased toward basic and acidic residues: residues 246–276 (VEEK…KQET), 283–294 (QGEKGQIKEEST), and 309–333 (QQKE…ETKS). Positions 355–368 (TEQSNIDESATTPA) are enriched in polar residues. Position 503 is a phosphoserine (serine 503). Basic and acidic residues-rich tracts occupy residues 504 to 521 (RGHD…DRAN) and 532 to 569 (RMND…KEEV). The 244-residue stretch at 607–850 (ERKMKSLLNK…IDIKELRHDK (244 aa)) folds into the MIF4G domain. Residues 870–952 (EEERQRQLKN…ALMGESDDEE (83 aa)) form a disordered region. Over residues 879–894 (NNSRSNSRRTNNSSNR) the composition is skewed to low complexity. Serine 883 carries the phosphoserine modification. A Phosphothreonine modification is found at threonine 888. 4 positions are modified to phosphoserine: serine 892, serine 896, serine 908, and serine 948. Residues 908–922 (SFITTRTYSQRNSQR) are compositionally biased toward polar residues.

Belongs to the eukaryotic initiation factor 4G family. As to quaternary structure, component of the eIF4F complex, which composition varies with external and internal environmental conditions. It is composed of at least eIF4A (TIF1/TIF2), eIF4E (TIF45) and eIF4G (TIF4631 or TIF4632). Interacts with PAT1 in a RNA-dependent manner.

It localises to the cytoplasm. The protein localises to the P-body. It is found in the stress granule. Functionally, component of the eIF4F complex, which interacts with the mRNA cap structure and serves as an initial point of assembly for the translation apparatus. Stimulates translation by interaction with polyadenylate-binding protein PAB1, bringing the 5'- and 3'-ends of the mRNA in proximity. The formation of this circular mRNP structure appears to be critical for the synergistic effects of the cap and the poly(A) tail in facilitating translation initiation, recycling of ribosomes, and mRNA stability. TIF4631 is probably essential when TIF4632 is missing. In Saccharomyces cerevisiae (strain ATCC 204508 / S288c) (Baker's yeast), this protein is Eukaryotic initiation factor 4F subunit p150.